The primary structure comprises 320 residues: 2-oxoglutarate-dependent dioxygenase thnC (320 aa).

Residues 174–278 form the Fe2OG dioxygenase domain; it reads PLVQMKLIRY…HSCATFWHGD (105 aa). H199, D201, and H258 together coordinate Fe cation. R268 is a binding site for 2-oxoglutarate.

This sequence belongs to the iron/ascorbate-dependent oxidoreductase family. It depends on Fe(2+) as a cofactor.

It catalyses the reaction trihazone A + 2-oxoglutarate + O2 + H(+) = trihazone D + succinate + 2 CO2 + H2O. It participates in secondary metabolite biosynthesis. Its function is as follows. 2-oxoglutarate-dependent dioxygenase; part of the gene cluster that produces the tetronate natural products trihazones. ThnC catalyzes the oxidative decarboxylation of trihazone A to trihazone D. The C4 hydrogen is first abstracted by the iron-oxo species generated in ThnC to give a tertiary radical at C4. This is followed by decarboxylation and removal of the second electron by the FeIII-OH center to give trihazone D. The pathway begins with the formation of trihazone A by the hybrid PKS-NRPS synthetase thnA and the trans-enoyl reductase thnE. Trihazone A is further decarboxylated by the 2-oxoglutarate-dependent dioxygenase thnC to produce trihazone D. The function of the FAD-dependent monooxygenase thnD has still to be identified. This Trichoderma harzianum (Hypocrea lixii) protein is 2-oxoglutarate-dependent dioxygenase thnC.